The primary structure comprises 262 residues: Hydroxyethylthiazole kinase (262 aa).

Methionine 50 is a substrate binding site. Residues arginine 125 and threonine 171 each coordinate ATP. Glycine 198 lines the substrate pocket.

Belongs to the Thz kinase family. The cofactor is Mg(2+).

The enzyme catalyses 5-(2-hydroxyethyl)-4-methylthiazole + ATP = 4-methyl-5-(2-phosphooxyethyl)-thiazole + ADP + H(+). It participates in cofactor biosynthesis; thiamine diphosphate biosynthesis; 4-methyl-5-(2-phosphoethyl)-thiazole from 5-(2-hydroxyethyl)-4-methylthiazole: step 1/1. In terms of biological role, catalyzes the phosphorylation of the hydroxyl group of 4-methyl-5-beta-hydroxyethylthiazole (THZ). The protein is Hydroxyethylthiazole kinase of Shigella boydii serotype 4 (strain Sb227).